We begin with the raw amino-acid sequence, 498 residues long: Osteoclast stimulatory transmembrane protein (498 aa).

Residues 1 to 51 are Cytoplasmic-facing; it reads MRTIRAATEHLFGLGWKFWRLGICKAVVPLQAAWKAFSQPVPASCNELLTQ. The chain crosses the membrane as a helical span at residues 52–72; the sequence is LLLCVSLASLIAGLAHHWLVS. The Extracellular segment spans residues 73-81; the sequence is LQLYPLGPP. The chain crosses the membrane as a helical span at residues 82–102; the sequence is ALVTSLCGLFVFLSLGLVPPI. The Cytoplasmic segment spans residues 103–121; it reads RCLFVLSVPTLGSKQGRRL. Residues 122-142 traverse the membrane as a helical segment; that stretch reads LLSYSAANLAVAVVPNVLGNV. At 143 to 226 the chain is on the extracellular side; that stretch reads RAAGQVLSCV…LARAALGTQR (84 aa). The chain crosses the membrane as a helical span at residues 227-247; it reads VVTGLFLLGLLGESAWYLHRY. Residues 248–303 lie on the Cytoplasmic side of the membrane; that stretch reads LTDLRFDNIYATRQLVRQLAQAGATHLLTSPPPWLLQTAQPKLSREELLSCLLRLG. The chain crosses the membrane as a helical span at residues 304–324; sequence LLALLLVATAVTVASDYGAFL. Over 325–401 the chain is Extracellular; the sequence is LAQAAVAWAQ…QAQPPRVTAA (77 aa). The helical transmembrane segment at 402 to 422 threads the bilayer; the sequence is LAAGALQLLAGATLVLQAYAW. The Cytoplasmic portion of the chain corresponds to 423 to 498; sequence RLRHTIAASF…DSLGPPYDLE (76 aa). Positions 449 to 498 are disordered; it reads QRRHNQSDHLNKQPGTMATRESRKPGQGTRTLESQGPQAHDSLGPPYDLE. The span at 476–485 shows a compositional bias: polar residues; it reads GTRTLESQGP.

As to expression, expressed in osteoclast (at protein level). Ubiquitous. Highly expressed in multi-nuclear osteoclast cells compared to mono-nuclear macrophages. Expressed in foreign body giant cells (FBGCs).

The protein localises to the membrane. Probable cell surface receptor that plays a role in cellular fusion and cell differentiation. Cooperates with DCSTAMP in modulating cell-cell fusion in both osteoclasts and foreign body giant cells (FBGCs). Involved in osteoclast bone resorption. Promotes osteoclast differentiation and may play a role in the multinucleated osteoclast maturation. This chain is Osteoclast stimulatory transmembrane protein (Ocstamp), found in Mus musculus (Mouse).